A 334-amino-acid polypeptide reads, in one-letter code: S-adenosylmethionine decarboxylase proenzyme 1 (334 aa).

Phe-7 contacts substrate. Catalysis depends on residues Glu-8 and Glu-11. Glu-67 serves as a coordination point for substrate. Ser-68 (schiff-base intermediate with substrate; via pyruvic acid) is an active-site residue. Pyruvic acid (Ser); by autocatalysis is present on Ser-68. The Proton donor; for catalytic activity role is filled by Cys-82. Substrate is bound at residue Phe-223. Residues Ser-229 and His-243 each act as proton acceptor; for processing activity in the active site. Position 247 (Glu-247) interacts with substrate. Residue Ser-298 is modified to Phosphoserine.

Belongs to the eukaryotic AdoMetDC family. Heterotetramer of two alpha and two beta chains. It depends on pyruvate as a cofactor. In terms of processing, is synthesized initially as an inactive proenzyme. Formation of the active enzyme involves a self-maturation process in which the active site pyruvoyl group is generated from an internal serine residue via an autocatalytic post-translational modification. Two non-identical subunits are generated from the proenzyme in this reaction, and the pyruvate is formed at the N-terminus of the alpha chain, which is derived from the carboxyl end of the proenzyme. The post-translation cleavage follows an unusual pathway, termed non-hydrolytic serinolysis, in which the side chain hydroxyl group of the serine supplies its oxygen atom to form the C-terminus of the beta chain, while the remainder of the serine residue undergoes an oxidative deamination to produce ammonia and the pyruvoyl group blocking the N-terminus of the alpha chain. In terms of tissue distribution, expressed in embryonic stem cells; subsequently down-regulated in differentiating neural precursor cells.

The enzyme catalyses S-adenosyl-L-methionine + H(+) = S-adenosyl 3-(methylsulfanyl)propylamine + CO2. Its pathway is amine and polyamine biosynthesis; S-adenosylmethioninamine biosynthesis; S-adenosylmethioninamine from S-adenosyl-L-methionine: step 1/1. Its function is as follows. Essential for biosynthesis of the polyamines spermidine and spermine. Promotes maintenance and self-renewal of embryonic stem cells, by maintaining spermine levels. The polypeptide is S-adenosylmethionine decarboxylase proenzyme 1 (Amd1) (Mus musculus (Mouse)).